The primary structure comprises 561 residues: DNA ligase B (561 aa).

Lys125 functions as the N6-AMP-lysine intermediate in the catalytic mechanism.

The protein belongs to the NAD-dependent DNA ligase family. LigB subfamily.

The enzyme catalyses NAD(+) + (deoxyribonucleotide)n-3'-hydroxyl + 5'-phospho-(deoxyribonucleotide)m = (deoxyribonucleotide)n+m + AMP + beta-nicotinamide D-nucleotide.. Catalyzes the formation of phosphodiester linkages between 5'-phosphoryl and 3'-hydroxyl groups in double-stranded DNA using NAD as a coenzyme and as the energy source for the reaction. The chain is DNA ligase B from Salmonella agona (strain SL483).